Here is a 450-residue protein sequence, read N- to C-terminus: Phosphoglucosamine mutase (450 aa).

Ser97 acts as the Phosphoserine intermediate in catalysis. Ser97, Asp236, Asp238, and Asp240 together coordinate Mg(2+). Position 97 is a phosphoserine (Ser97).

This sequence belongs to the phosphohexose mutase family. It depends on Mg(2+) as a cofactor. Post-translationally, activated by phosphorylation.

The enzyme catalyses alpha-D-glucosamine 1-phosphate = D-glucosamine 6-phosphate. Catalyzes the conversion of glucosamine-6-phosphate to glucosamine-1-phosphate. This chain is Phosphoglucosamine mutase, found in Prochlorococcus marinus (strain MIT 9312).